Here is a 434-residue protein sequence, read N- to C-terminus: Threonylcarbamoyladenosine tRNA methylthiotransferase MtaB (434 aa).

The 111-residue stretch at 2–112 (KTVRIETFGC…IVDHINSLNG (111 aa)) folds into the MTTase N-terminal domain. Residues Cys-11, Cys-46, Cys-77, Cys-147, Cys-151, and Cys-154 each contribute to the [4Fe-4S] cluster site. One can recognise a Radical SAM core domain in the interval 133–362 (FEDRTRSYIK…KEKAKDVSIR (230 aa)).

This sequence belongs to the methylthiotransferase family. MtaB subfamily. [4Fe-4S] cluster serves as cofactor.

The protein resides in the cytoplasm. It catalyses the reaction N(6)-L-threonylcarbamoyladenosine(37) in tRNA + (sulfur carrier)-SH + AH2 + 2 S-adenosyl-L-methionine = 2-methylsulfanyl-N(6)-L-threonylcarbamoyladenosine(37) in tRNA + (sulfur carrier)-H + 5'-deoxyadenosine + L-methionine + A + S-adenosyl-L-homocysteine + 2 H(+). Functionally, catalyzes the methylthiolation of N6-threonylcarbamoyladenosine (t(6)A), leading to the formation of 2-methylthio-N6-threonylcarbamoyladenosine (ms(2)t(6)A) at position 37 in tRNAs that read codons beginning with adenine. This is Threonylcarbamoyladenosine tRNA methylthiotransferase MtaB (mtaB) from Thermotoga maritima (strain ATCC 43589 / DSM 3109 / JCM 10099 / NBRC 100826 / MSB8).